We begin with the raw amino-acid sequence, 94 residues long: uncharacterized protein (94 aa).

In terms of tissue distribution, specifically expressed in retina and retinal pigment epithelium.

This is an uncharacterized protein from Homo sapiens (Human).